Reading from the N-terminus, the 138-residue chain is Small ribosomal subunit protein uS11c (138 aa).

Positions 1–22 are disordered; that stretch reads MAKPIPRIGSQRNRRINSRKNA. Residues 12 to 22 are compositionally biased toward basic residues; sequence RNRRINSRKNA.

Belongs to the universal ribosomal protein uS11 family. As to quaternary structure, part of the 30S ribosomal subunit.

Its subcellular location is the plastid. It localises to the chloroplast. In Fagopyrum esculentum subsp. ancestrale (Wild buckwheat), this protein is Small ribosomal subunit protein uS11c.